Consider the following 361-residue polypeptide: Peptide chain release factor 1 (361 aa).

Residue Gln-237 is modified to N5-methylglutamine. The interval 285–306 is disordered; it reads QAEQSAQQTEQRRQLVGSGDRS.

The protein belongs to the prokaryotic/mitochondrial release factor family. Methylated by PrmC. Methylation increases the termination efficiency of RF1.

Its subcellular location is the cytoplasm. Peptide chain release factor 1 directs the termination of translation in response to the peptide chain termination codons UAG and UAA. This Alkalilimnicola ehrlichii (strain ATCC BAA-1101 / DSM 17681 / MLHE-1) protein is Peptide chain release factor 1.